The primary structure comprises 1269 residues: Histone-lysine N-methyltransferase SETDB1 (1269 aa).

The stretch at K9–A63 forms a coiled coil. Disordered stretches follow at residues Y85–V121 and Q153–K188. Residues E103–V112 show a composition bias toward acidic residues. Residues S164 to S177 are compositionally biased toward low complexity. Tudor domains follow at residues E250–S312 and V340–M395. The span at K396–R414 shows a compositional bias: polar residues. The disordered stretch occupies residues K396–V516. The segment covering D462–S476 has biased composition (low complexity). Over residues S486–V497 the composition is skewed to polar residues. The region spanning H620 to L691 is the MBD domain. Positions V753 to G826 constitute a Pre-SET domain. C755, C757, C761, C767, C769, C807, C811, C813, and C818 together coordinate Zn(2+). One can recognise an SET domain in the interval V829–N1244. S-adenosyl-L-methionine contacts are provided by residues K839–W841, D877, and Y879. The tract at residues E894–R1139 is disordered. Acidic residues predominate over residues S919–D932. 2 stretches are compositionally biased toward basic and acidic residues: residues A968–K989 and E1021–K1033. Low complexity predominate over residues T1078 to S1094. The span at A1106–G1120 shows a compositional bias: polar residues. Residues R1198 and N1201 to H1202 each bind S-adenosyl-L-methionine. Zn(2+) is bound by residues C1204, C1257, C1259, and C1264. A Post-SET domain is found at K1253 to L1269.

Belongs to the class V-like SAM-binding methyltransferase superfamily. Histone-lysine methyltransferase family. Suvar3-9 subfamily.

Its subcellular location is the nucleus. The protein localises to the chromosome. It catalyses the reaction N(6),N(6)-dimethyl-L-lysyl(9)-[histone H3] + S-adenosyl-L-methionine = N(6),N(6),N(6)-trimethyl-L-lysyl(9)-[histone H3] + S-adenosyl-L-homocysteine + H(+). Histone methyltransferase that specifically trimethylates 'Lys-9' of histone H3. H3 'Lys-9' trimethylation represents a specific tag for epigenetic transcriptional repression by recruiting HP1 (CBX1, CBX3 and/or CBX5) proteins to methylated histones. Mainly functions in euchromatin regions, thereby playing a central role in the silencing of euchromatic genes. H3 'Lys-9' trimethylation is coordinated with DNA methylation. Plays a role in promoter hypermethylation and transcriptional silencing of tumor suppressor genes (TSGs) or other tumor-related genes. Also required to maintain a transcriptionally repressive state of genes in undifferentiated embryonic stem cells (ESCs). Associates at promoter regions of tumor suppressor genes (TSGs) leading to their gene silencing. The sequence is that of Histone-lysine N-methyltransferase SETDB1 (setdb1) from Xenopus laevis (African clawed frog).